We begin with the raw amino-acid sequence, 491 residues long: Ketol-acid reductoisomerase (NADP(+)) (491 aa).

A KARI N-terminal Rossmann domain is found at 15 to 208; it reads AQLGKCRFMG…GGHRAGVLES (194 aa). Residues 45–48, arginine 68, arginine 76, serine 78, and 108–110 each bind NADP(+); these read CGAQ and DKQ. Histidine 132 is a catalytic residue. Glycine 158 lines the NADP(+) pocket. 2 KARI C-terminal knotted domains span residues 209–344 and 345–484; these read SFVA…TAPQ and FEGK…MTDM. Residues aspartate 217, glutamate 221, glutamate 389, and glutamate 393 each contribute to the Mg(2+) site. A substrate-binding site is contributed by serine 414.

It belongs to the ketol-acid reductoisomerase family. Requires Mg(2+) as cofactor.

The enzyme catalyses (2R)-2,3-dihydroxy-3-methylbutanoate + NADP(+) = (2S)-2-acetolactate + NADPH + H(+). It catalyses the reaction (2R,3R)-2,3-dihydroxy-3-methylpentanoate + NADP(+) = (S)-2-ethyl-2-hydroxy-3-oxobutanoate + NADPH + H(+). Its pathway is amino-acid biosynthesis; L-isoleucine biosynthesis; L-isoleucine from 2-oxobutanoate: step 2/4. It functions in the pathway amino-acid biosynthesis; L-valine biosynthesis; L-valine from pyruvate: step 2/4. Functionally, involved in the biosynthesis of branched-chain amino acids (BCAA). Catalyzes an alkyl-migration followed by a ketol-acid reduction of (S)-2-acetolactate (S2AL) to yield (R)-2,3-dihydroxy-isovalerate. In the isomerase reaction, S2AL is rearranged via a Mg-dependent methyl migration to produce 3-hydroxy-3-methyl-2-ketobutyrate (HMKB). In the reductase reaction, this 2-ketoacid undergoes a metal-dependent reduction by NADPH to yield (R)-2,3-dihydroxy-isovalerate. This Salmonella choleraesuis (strain SC-B67) protein is Ketol-acid reductoisomerase (NADP(+)).